We begin with the raw amino-acid sequence, 265 residues long: Shikimate dehydrogenase (NADP(+)) (265 aa).

Shikimate-binding positions include 14–16 (SLS) and threonine 61. The active-site Proton acceptor is the lysine 65. Shikimate-binding residues include asparagine 85 and aspartate 100. NADP(+)-binding positions include 123–127 (GAGGA), 146–151 (NRTESK), and alanine 209. Residue tyrosine 211 participates in shikimate binding. An NADP(+)-binding site is contributed by glycine 232.

The protein belongs to the shikimate dehydrogenase family. As to quaternary structure, homodimer.

The enzyme catalyses shikimate + NADP(+) = 3-dehydroshikimate + NADPH + H(+). It functions in the pathway metabolic intermediate biosynthesis; chorismate biosynthesis; chorismate from D-erythrose 4-phosphate and phosphoenolpyruvate: step 4/7. Its function is as follows. Involved in the biosynthesis of the chorismate, which leads to the biosynthesis of aromatic amino acids. Catalyzes the reversible NADPH linked reduction of 3-dehydroshikimate (DHSA) to yield shikimate (SA). This chain is Shikimate dehydrogenase (NADP(+)), found in Haloarcula marismortui (strain ATCC 43049 / DSM 3752 / JCM 8966 / VKM B-1809) (Halobacterium marismortui).